Consider the following 367-residue polypeptide: Viral cathepsin (367 aa).

The N-terminal stretch at 1–25 (MRKYHSNIMHKIITFVSLLWTFVVC) is a signal peptide. Residues 26-156 (DEISLHTSSS…IVKGAPDIRL (131 aa)) constitute a propeptide, activation peptide. Asn-103 and Asn-135 each carry an N-linked (GlcNAc...) asparagine; by host glycan. Intrachain disulfides connect Cys-177–Cys-218, Cys-211–Cys-251, and Cys-306–Cys-354. Cys-180 is a catalytic residue. Active-site residues include His-313 and Asn-333.

This sequence belongs to the peptidase C1 family. Synthesized as an inactive proenzyme and activated by proteolytic removal of the inhibitory propeptide.

The enzyme catalyses Endopeptidase of broad specificity, hydrolyzing substrates of both cathepsin L and cathepsin B.. Functionally, cysteine protease that plays an essential role in host liquefaction to facilitate horizontal transmission of the virus. May participate in the degradation of foreign protein expressed by the baculovirus system. The chain is Viral cathepsin (VCATH) from Lepidoptera (butterflies and moths).